A 297-amino-acid polypeptide reads, in one-letter code: Transcription factor PCF8 (297 aa).

The tract at residues 1 to 22 (MEEVVGGGKERKRPRGALVGVG) is disordered. In terms of domain architecture, TCP spans 46 to 104 (GKDRHSKVVTSRGLRDRRVRLSVPTAIAFYDIQDRLGVDQPSKAIEWLIRAAAAAIDAL). 2 disordered regions span residues 116-136 (AASS…SETS) and 273-297 (AAPA…ERKT). The segment covering 282 to 297 (GERRLQLWDFKEERKT) has biased composition (basic and acidic residues).

Forms homodimers and heterodimers.

The protein resides in the nucleus. Transcription activator. Binds the promoter core sequence 5'-GGNCC-3'. This Oryza sativa subsp. indica (Rice) protein is Transcription factor PCF8 (PCF8).